We begin with the raw amino-acid sequence, 134 residues long: Arginine decarboxylase proenzyme (134 aa).

The active-site Schiff-base intermediate with substrate; via pyruvic acid is the Ser82. A Pyruvic acid (Ser); by autocatalysis modification is found at Ser82. His87 functions as the Proton acceptor; for processing activity in the catalytic mechanism. The active-site Proton donor; for catalytic activity is Cys102.

This sequence belongs to the prokaryotic AdoMetDC family. Type 1 subfamily. As to quaternary structure, heterooctamer of four alpha and four beta chains arranged as a tetramer of alpha/beta heterodimers. It depends on pyruvate as a cofactor. In terms of processing, is synthesized initially as an inactive proenzyme. Formation of the active enzyme involves a self-maturation process in which the active site pyruvoyl group is generated from an internal serine residue via an autocatalytic post-translational modification. Two non-identical subunits are generated from the proenzyme in this reaction, and the pyruvate is formed at the N-terminus of the alpha chain, which is derived from the carboxyl end of the proenzyme. The post-translation cleavage follows an unusual pathway, termed non-hydrolytic serinolysis, in which the side chain hydroxyl group of the serine supplies its oxygen atom to form the C-terminus of the beta chain, while the remainder of the serine residue undergoes an oxidative deamination to produce ammonia and the pyruvoyl group blocking the N-terminus of the alpha chain.

The catalysed reaction is L-arginine + H(+) = agmatine + CO2. Its pathway is amine and polyamine biosynthesis; agmatine biosynthesis; agmatine from L-arginine: step 1/1. Its function is as follows. Specifically catalyzes the decarboxylation of L-arginine to agmatine. Has no S-adenosylmethionine decarboxylase (AdoMetDC) activity. The protein is Arginine decarboxylase proenzyme of Saccharolobus islandicus (strain M.16.4 / Kamchatka #3) (Sulfolobus islandicus).